A 375-amino-acid polypeptide reads, in one-letter code: Beta sliding clamp (375 aa).

The protein belongs to the beta sliding clamp family. As to quaternary structure, forms a ring-shaped head-to-tail homodimer around DNA which binds and tethers DNA polymerases and other proteins to the DNA. The DNA replisome complex has a single clamp-loading complex (3 tau and 1 each of delta, delta', psi and chi subunits) which binds 3 Pol III cores (1 core on the leading strand and 2 on the lagging strand) each with a beta sliding clamp dimer. Additional proteins in the replisome are other copies of gamma, psi and chi, Ssb, DNA helicase and RNA primase.

It is found in the cytoplasm. Confers DNA tethering and processivity to DNA polymerases and other proteins. Acts as a clamp, forming a ring around DNA (a reaction catalyzed by the clamp-loading complex) which diffuses in an ATP-independent manner freely and bidirectionally along dsDNA. Initially characterized for its ability to contact the catalytic subunit of DNA polymerase III (Pol III), a complex, multichain enzyme responsible for most of the replicative synthesis in bacteria; Pol III exhibits 3'-5' exonuclease proofreading activity. The beta chain is required for initiation of replication as well as for processivity of DNA replication. This chain is Beta sliding clamp (dnaN), found in Mycoplasma capricolum subsp. capricolum (strain California kid / ATCC 27343 / NCTC 10154).